Here is a 128-residue protein sequence, read N- to C-terminus: Sulfurtransferase TusD (128 aa).

Cys78 serves as the catalytic Cysteine persulfide intermediate.

It belongs to the DsrE/TusD family. In terms of assembly, heterohexamer, formed by a dimer of trimers. The hexameric TusBCD complex contains 2 copies each of TusB, TusC and TusD. The TusBCD complex interacts with TusE.

Its subcellular location is the cytoplasm. Functionally, part of a sulfur-relay system required for 2-thiolation of 5-methylaminomethyl-2-thiouridine (mnm(5)s(2)U) at tRNA wobble positions. Accepts sulfur from TusA and transfers it in turn to TusE. This chain is Sulfurtransferase TusD, found in Escherichia coli (strain 55989 / EAEC).